The chain runs to 334 residues: Protein-glutamate methylesterase/protein-glutamine glutaminase 1 (334 aa).

The region spanning 2 to 120 (NIGIVNDLPL…GAAGDTTKLL (119 aa)) is the Response regulatory domain. The residue at position 53 (Asp53) is a 4-aspartylphosphate. Residues 145 to 334 (RAGGGPLIAI…AGELAALARI (190 aa)) enclose the CheB-type methylesterase domain. Active-site residues include Ser157, His184, and Asp277.

Belongs to the CheB family. Post-translationally, phosphorylated by CheA. Phosphorylation of the N-terminal regulatory domain activates the methylesterase activity.

It localises to the cytoplasm. The catalysed reaction is [protein]-L-glutamate 5-O-methyl ester + H2O = L-glutamyl-[protein] + methanol + H(+). The enzyme catalyses L-glutaminyl-[protein] + H2O = L-glutamyl-[protein] + NH4(+). Its function is as follows. Involved in chemotaxis. Part of a chemotaxis signal transduction system that modulates chemotaxis in response to various stimuli. Catalyzes the demethylation of specific methylglutamate residues introduced into the chemoreceptors (methyl-accepting chemotaxis proteins or MCP) by CheR. Also mediates the irreversible deamidation of specific glutamine residues to glutamic acid. The polypeptide is Protein-glutamate methylesterase/protein-glutamine glutaminase 1 (Burkholderia lata (strain ATCC 17760 / DSM 23089 / LMG 22485 / NCIMB 9086 / R18194 / 383)).